Here is a 243-residue protein sequence, read N- to C-terminus: Venom nerve growth factor 1 (243 aa).

The first 18 residues, 1–18 (MSMLCYTLIIAFLIGIWA), serve as a signal peptide directing secretion. Positions 19 to 125 (VPKSEDNAPL…ALNRNIRAKR (107 aa)) are excised as a propeptide. 3 disulfide bridges follow: C139/C204, C182/C232, and C192/C234. N148 is a glycosylation site (N-linked (GlcNAc...) asparagine).

The protein belongs to the NGF-beta family. Homodimer; non-covalently linked. In terms of tissue distribution, expressed by the venom gland.

Its subcellular location is the secreted. Nerve growth factor is important for the development and maintenance of the sympathetic and sensory nervous systems. It stimulates division and differentiation of sympathetic and embryonic sensory neurons as well as basal forebrain cholinergic neurons in the brain. Its relevance in the snake venom is not clear. However, it has been shown to inhibit metalloproteinase-dependent proteolysis of platelet glycoprotein Ib alpha, suggesting a metalloproteinase inhibition to prevent metalloprotease autodigestion and/or protection against prey proteases. Binds a lipid between the two protein chains in the homodimer. The lipid-bound form promotes histamine relase from mouse mast cells, contrary to the lipid-free form. The polypeptide is Venom nerve growth factor 1 (Naja sputatrix (Malayan spitting cobra)).